Here is a 300-residue protein sequence, read N- to C-terminus: Haloalkane dehalogenase (300 aa).

Positions 32 to 155 (AIVFQHGNPT…PAVRGVFQGF (124 aa)) constitute an AB hydrolase-1 domain. The active-site Nucleophile is the D109. E133 functions as the Proton donor in the catalytic mechanism. H273 acts as the Proton acceptor in catalysis.

This sequence belongs to the haloalkane dehalogenase family. Type 2 subfamily. In terms of assembly, monomer.

It catalyses the reaction 1-haloalkane + H2O = a halide anion + a primary alcohol + H(+). Functionally, catalyzes hydrolytic cleavage of carbon-halogen bonds in halogenated aliphatic compounds, leading to the formation of the corresponding primary alcohols, halide ions and protons. The sequence is that of Haloalkane dehalogenase from Mycobacterium bovis (strain BCG / Pasteur 1173P2).